The sequence spans 107 residues: Protamine-2 (107 aa).

The interval 1–94 is disordered; the sequence is MVRYRMRSPS…RRGCRRSRRR (94 aa). Residues S8, S10, and S33 each carry the phosphoserine modification. The segment covering 43–94 has biased composition (basic residues); it reads THRGHHHHRHRRCSRKRLHRIHKRRRSCRRRRRHSCRHRRRHRRGCRRSRRR.

It belongs to the protamine P2 family. Interacts with TDRP. Post-translationally, proteolytic processing into mature chains is required for histone eviction during spermatogenesis. Transition proteins (TNP1 and TNP2) are required for processing. In terms of tissue distribution, expressed in spermatids (at protein level).

The protein resides in the nucleus. It localises to the chromosome. Protamines substitute for histones in the chromatin of sperm during the haploid phase of spermatogenesis. They compact sperm DNA into a highly condensed, stable and inactive complex. This chain is Protamine-2 (Prm2), found in Mus musculus (Mouse).